The sequence spans 405 residues: tRNA N6-adenosine threonylcarbamoyltransferase, mitochondrial (405 aa).

A mitochondrion-targeting transit peptide spans methionine 1–serine 19. Histidine 138 and histidine 142 together coordinate a divalent metal cation. Substrate contacts are provided by residues leucine 160–glycine 164, aspartate 193, glycine 213, glutamate 217, serine 320–asparagine 321, and threonine 348. Aspartate 349 is an a divalent metal cation binding site.

The protein belongs to the KAE1 / TsaD family. In terms of assembly, monomer. It depends on a divalent metal cation as a cofactor.

The protein resides in the mitochondrion. It carries out the reaction L-threonylcarbamoyladenylate + adenosine(37) in tRNA = N(6)-L-threonylcarbamoyladenosine(37) in tRNA + AMP + H(+). Its function is as follows. Required for the formation of a threonylcarbamoyl group on adenosine at position 37 (t(6)A37) in mitochondrial tRNAs that read codons beginning with adenine. Probably involved in the transfer of the threonylcarbamoyl moiety of threonylcarbamoyl-AMP (TC-AMP) to the N6 group of A37. Involved in mitochondrial genome maintenance. The protein is tRNA N6-adenosine threonylcarbamoyltransferase, mitochondrial of Xenopus tropicalis (Western clawed frog).